A 165-amino-acid polypeptide reads, in one-letter code: Large ribosomal subunit protein uL10 (165 aa).

It belongs to the universal ribosomal protein uL10 family. Part of the ribosomal stalk of the 50S ribosomal subunit. The N-terminus interacts with L11 and the large rRNA to form the base of the stalk. The C-terminus forms an elongated spine to which L12 dimers bind in a sequential fashion forming a multimeric L10(L12)X complex.

Forms part of the ribosomal stalk, playing a central role in the interaction of the ribosome with GTP-bound translation factors. The polypeptide is Large ribosomal subunit protein uL10 (Borrelia turicatae (strain 91E135)).